Reading from the N-terminus, the 206-residue chain is Small ribosomal subunit protein uS4 (206 aa).

The region spanning 96-156 is the S4 RNA-binding domain; it reads GRLDNVVYRM…EKSKNQLRIQ (61 aa).

It belongs to the universal ribosomal protein uS4 family. As to quaternary structure, part of the 30S ribosomal subunit. Contacts protein S5. The interaction surface between S4 and S5 is involved in control of translational fidelity.

Its function is as follows. One of the primary rRNA binding proteins, it binds directly to 16S rRNA where it nucleates assembly of the body of the 30S subunit. With S5 and S12 plays an important role in translational accuracy. The protein is Small ribosomal subunit protein uS4 of Saccharophagus degradans (strain 2-40 / ATCC 43961 / DSM 17024).